Here is a 270-residue protein sequence, read N- to C-terminus: Putative pyruvate, phosphate dikinase regulatory protein 2 (270 aa).

ADP is bound at residue 151–158 (GVSRTSKT).

The protein belongs to the pyruvate, phosphate/water dikinase regulatory protein family. PDRP subfamily.

It catalyses the reaction N(tele)-phospho-L-histidyl/L-threonyl-[pyruvate, phosphate dikinase] + ADP = N(tele)-phospho-L-histidyl/O-phospho-L-threonyl-[pyruvate, phosphate dikinase] + AMP + H(+). It carries out the reaction N(tele)-phospho-L-histidyl/O-phospho-L-threonyl-[pyruvate, phosphate dikinase] + phosphate + H(+) = N(tele)-phospho-L-histidyl/L-threonyl-[pyruvate, phosphate dikinase] + diphosphate. Bifunctional serine/threonine kinase and phosphorylase involved in the regulation of the pyruvate, phosphate dikinase (PPDK) by catalyzing its phosphorylation/dephosphorylation. This is Putative pyruvate, phosphate dikinase regulatory protein 2 from Listeria innocua serovar 6a (strain ATCC BAA-680 / CLIP 11262).